We begin with the raw amino-acid sequence, 239 residues long: Proteasome activator complex subunit 2 (239 aa).

Position 2 is an N-acetylalanine (alanine 2). Serine 10 carries the phosphoserine modification. A disordered region spans residues 65 to 86; it reads DIPIPDPPPKDDEMETDKQEKK. Residues 72-86 show a composition bias toward basic and acidic residues; it reads PPKDDEMETDKQEKK.

Belongs to the PA28 family. In terms of assembly, heterodimer of PSME1 and PSME2, which forms a hexameric ring.

Its function is as follows. Implicated in immunoproteasome assembly and required for efficient antigen processing. The PA28 activator complex enhances the generation of class I binding peptides by altering the cleavage pattern of the proteasome. This Bos taurus (Bovine) protein is Proteasome activator complex subunit 2 (PSME2).